A 559-amino-acid polypeptide reads, in one-letter code: Potassium-transporting ATPase potassium-binding subunit (559 aa).

13 helical membrane passes run 5 to 25 (GFLLIASFLLILLVLAKPLGS), 27 to 47 (LARLIAAVPLPGVAGVERILW), 63 to 83 (LLALLTLNLLGLGILFCLLFW), 132 to 152 (GLTVQNFLSAATGIAVVFALI), 170 to 190 (LVRITLWILFPVALIIALFFI), 253 to 273 (LAQMLAIFLIPAALCFAFGEA), 283 to 303 (LLWAMSFIFVVCVAVVMWAEV), 327 to 347 (FGVLASSLFAVVTTAASCGAV), 356 to 376 (ALGGMVPMWLMQIGEVVFGGV), 379 to 399 (GLYGMLLFVLLAVFIAGLMIG), 416 to 436 (MTALAILVTPMLVLLGSALAM), 484 to 504 (LLAFCMFVGRFGVIIPVMAIA), and 524 to 544 (GALFIGLLIGTVLLVGALTFI).

This sequence belongs to the KdpA family. The system is composed of three essential subunits: KdpA, KdpB and KdpC.

It localises to the cell inner membrane. Its function is as follows. Part of the high-affinity ATP-driven potassium transport (or Kdp) system, which catalyzes the hydrolysis of ATP coupled with the electrogenic transport of potassium into the cytoplasm. This subunit binds the periplasmic potassium ions and delivers the ions to the membrane domain of KdpB through an intramembrane tunnel. The sequence is that of Potassium-transporting ATPase potassium-binding subunit from Salmonella dublin (strain CT_02021853).